An 87-amino-acid chain; its full sequence is Sec-independent protein translocase protein TatA (87 aa).

A helical transmembrane segment spans residues 1 to 21 (MGGISIWQLLIIALIIVLLFG). The segment at 54-87 (NTEADADFEQKTLSKEEQQSEDPVQKSQKDKEQV) is disordered.

It belongs to the TatA/E family. As to quaternary structure, the Tat system comprises two distinct complexes: a TatABC complex, containing multiple copies of TatA, TatB and TatC subunits, and a separate TatA complex, containing only TatA subunits. Substrates initially bind to the TatABC complex, which probably triggers association of the separate TatA complex to form the active translocon.

The protein localises to the cell inner membrane. Functionally, part of the twin-arginine translocation (Tat) system that transports large folded proteins containing a characteristic twin-arginine motif in their signal peptide across membranes. TatA could form the protein-conducting channel of the Tat system. This chain is Sec-independent protein translocase protein TatA, found in Photobacterium profundum (strain SS9).